Consider the following 494-residue polypeptide: Alpha-amylase-related protein (494 aa).

Positions 1-20 are cleaved as a signal peptide; it reads MFKFASAVILCVVAASSTLA. At Q21 the chain carries Pyrrolidone carboxylic acid. C48 and C104 are oxidised to a cystine. N118, Q169, and D178 together coordinate Ca(2+). A disulfide bond links C157 and C171. Position 206 (R206) interacts with chloride. D208 serves as the catalytic Nucleophile. Position 212 (H212) interacts with Ca(2+). E245 functions as the Proton donor in the catalytic mechanism. Chloride is bound by residues N308 and R343. Cystine bridges form between C376–C382, C418–C441, and C448–C460.

This sequence belongs to the glycosyl hydrolase 13 family. As to quaternary structure, monomer. Ca(2+) serves as cofactor. It depends on chloride as a cofactor.

It localises to the secreted. It catalyses the reaction Endohydrolysis of (1-&gt;4)-alpha-D-glucosidic linkages in polysaccharides containing three or more (1-&gt;4)-alpha-linked D-glucose units.. This Drosophila varians (Fruit fly) protein is Alpha-amylase-related protein (Amyrel).